Reading from the N-terminus, the 242-residue chain is Uridylate kinase (242 aa).

12–15 (KLSG) contacts ATP. The segment at 20 to 25 (GEKGYG) is involved in allosteric activation by GTP. A UMP-binding site is contributed by Gly55. ATP is bound by residues Gly56 and Arg60. Residues Asp75 and 136 to 143 (TGNPYFST) contribute to the UMP site. Residues Tyr169 and Asp172 each coordinate ATP.

Belongs to the UMP kinase family. In terms of assembly, homohexamer.

The protein localises to the cytoplasm. It catalyses the reaction UMP + ATP = UDP + ADP. The protein operates within pyrimidine metabolism; CTP biosynthesis via de novo pathway; UDP from UMP (UMPK route): step 1/1. With respect to regulation, allosterically activated by GTP. Inhibited by UTP. In terms of biological role, catalyzes the reversible phosphorylation of UMP to UDP. The sequence is that of Uridylate kinase from Carboxydothermus hydrogenoformans (strain ATCC BAA-161 / DSM 6008 / Z-2901).